Consider the following 92-residue polypeptide: Acylphosphatase (92 aa).

Residues 7 to 92 enclose the Acylphosphatase-like domain; sequence KTRCTISGRV…DPAPAEFSVG (86 aa). Residues Arg22 and Asn40 contribute to the active site.

It belongs to the acylphosphatase family.

The enzyme catalyses an acyl phosphate + H2O = a carboxylate + phosphate + H(+). The sequence is that of Acylphosphatase (acyP) from Halorhodospira halophila (strain DSM 244 / SL1) (Ectothiorhodospira halophila (strain DSM 244 / SL1)).